Here is a 392-residue protein sequence, read N- to C-terminus: Putative nickel insertion protein (392 aa).

The protein belongs to the LarC family.

This is Putative nickel insertion protein from Methanothrix thermoacetophila (strain DSM 6194 / JCM 14653 / NBRC 101360 / PT) (Methanosaeta thermophila).